A 291-amino-acid polypeptide reads, in one-letter code: Basic helix-loop-helix protein 80 (291 aa).

A disordered region spans residues 65–120; the sequence is SAVLDTSPSVDRKRKAAEDSAHSKDSCKDGKSRRGKKASKEVEEKSTTEDEPPKGY. Positions 80–117 are enriched in basic and acidic residues; sequence AAEDSAHSKDSCKDGKSRRGKKASKEVEEKSTTEDEPP. The Nuclear localization signal motif lies at 125 to 132; it reads ARRGQATD. Residues 129–142 form a basic motif; degenerate region; sequence QATDSHSLAERVRR. A bHLH domain is found at 129-179; sequence QATDSHSLAERVRRERISERMRMLQALVPGCDKVTGKALILDEIINYVQSL. The tract at residues 143 to 179 is helix-loop-helix motif; that stretch reads ERISERMRMLQALVPGCDKVTGKALILDEIINYVQSL.

This sequence belongs to the bHLH protein family. In terms of assembly, homodimer. Interacts with IBH1, BC1 and LO9-177.

It localises to the nucleus. Its function is as follows. Together with BCL2, positive regulator of cell elongation at least partially through increased gibberellic acid (GA) biosynthesis. The polypeptide is Basic helix-loop-helix protein 80 (Oryza sativa subsp. indica (Rice)).